Here is a 716-residue protein sequence, read N- to C-terminus: Putative proline--tRNA ligase C19C7.06 (716 aa).

Residues 655–675 form a disordered region; that stretch reads KNSARQVNGDEPEDEKAPSMG.

It belongs to the class-II aminoacyl-tRNA synthetase family.

The protein localises to the cytoplasm. It catalyses the reaction tRNA(Pro) + L-proline + ATP = L-prolyl-tRNA(Pro) + AMP + diphosphate. This chain is Putative proline--tRNA ligase C19C7.06 (prs1), found in Schizosaccharomyces pombe (strain 972 / ATCC 24843) (Fission yeast).